Here is a 199-residue protein sequence, read N- to C-terminus: Recombination protein RecR (199 aa).

A C4-type zinc finger spans residues 58–73 (CSVCFTLSDTPVCAIC). Residues 81-176 (SLLCVVEGPT…TVTRIASGMP (96 aa)) enclose the Toprim domain.

Belongs to the RecR family.

Functionally, may play a role in DNA repair. It seems to be involved in an RecBC-independent recombinational process of DNA repair. It may act with RecF and RecO. In Desulfosudis oleivorans (strain DSM 6200 / JCM 39069 / Hxd3) (Desulfococcus oleovorans), this protein is Recombination protein RecR.